The chain runs to 403 residues: S-adenosylmethionine synthase (403 aa).

Residue His-14 coordinates ATP. Position 16 (Asp-16) interacts with Mg(2+). Glu-42 provides a ligand contact to K(+). Residues Glu-55 and Gln-99 each coordinate L-methionine. A flexible loop region spans residues 99-109; it reads QSPEIAEGVDH. Residues 180–182, 250–251, Asp-259, 265–266, Ala-282, and Lys-286 each bind ATP; these read DAK, RF, and RK. Asp-259 is an L-methionine binding site. Lys-290 contacts L-methionine.

The protein belongs to the AdoMet synthase family. In terms of assembly, homotetramer; dimer of dimers. Mg(2+) is required as a cofactor. Requires K(+) as cofactor.

The protein resides in the cytoplasm. The catalysed reaction is L-methionine + ATP + H2O = S-adenosyl-L-methionine + phosphate + diphosphate. The protein operates within amino-acid biosynthesis; S-adenosyl-L-methionine biosynthesis; S-adenosyl-L-methionine from L-methionine: step 1/1. Its function is as follows. Catalyzes the formation of S-adenosylmethionine (AdoMet) from methionine and ATP. The overall synthetic reaction is composed of two sequential steps, AdoMet formation and the subsequent tripolyphosphate hydrolysis which occurs prior to release of AdoMet from the enzyme. This chain is S-adenosylmethionine synthase, found in Deinococcus deserti (strain DSM 17065 / CIP 109153 / LMG 22923 / VCD115).